We begin with the raw amino-acid sequence, 410 residues long: Magnesium transporter NIPA3 (410 aa).

Topologically, residues 1 to 67 are extracellular; sequence MGAQVRLPPG…ISANVENKYS (67 aa). N-linked (GlcNAc...) asparagine glycosylation is found at Asn25, Asn35, and Asn50. Residues 68–88 form a helical membrane-spanning segment; it reads LYVGLVLAVSSSIFIGSSFIL. The Cytoplasmic portion of the chain corresponds to 89 to 114; it reads KKKGLLQLASKGITRAGQGGHSYLKE. The helical transmembrane segment at 115–135 threads the bilayer; that stretch reads WLWWVGLLSMGVGEAANFAAY. Ala136 is a topological domain (extracellular). The helical transmembrane segment at 137–157 threads the bilayer; that stretch reads FAPATLVTPLGALSVLISAIL. Residues 158–165 lie on the Cytoplasmic side of the membrane; sequence SSYFLNEH. Residues 166–186 form a helical membrane-spanning segment; it reads LNIHGKIGCILSILGSTVMVI. Topologically, residues 187-207 are extracellular; that stretch reads HAPQEEEVTSLHEMEMKLRDP. The helical transmembrane segment at 208–228 threads the bilayer; that stretch reads GFISFAVIVTVISLVLILIVA. Topologically, residues 229–233 are cytoplasmic; it reads PKKGQ. The chain crosses the membrane as a helical span at residues 234–254; sequence TNILVYISICSLIGAFSVSSV. The Extracellular portion of the chain corresponds to 255-273; the sequence is KGLGIAIKELIEWKPVYKH. Residues 274–294 form a helical membrane-spanning segment; that stretch reads PLVFVLLAVLVLSVTTQINYL. At 295 to 304 the chain is on the cytoplasmic side; it reads NKALDTFNTS. Residues 305–325 traverse the membrane as a helical segment; that stretch reads IVTPIYYVFFTSMVVTCSAIL. Over 326 to 336 the chain is Extracellular; the sequence is FQEWYGMTAGD. A helical membrane pass occupies residues 337-357; it reads IIGTLSGFFTIIIGIFLLHAF. Over 358-410 the chain is Cytoplasmic; sequence KNTDITWSELTSTAKKEAVSLNVSENNYVLLENLECSAPGYNDDVTLFSRTDD.

The protein belongs to the NIPA family.

Its subcellular location is the golgi apparatus membrane. It catalyses the reaction Mg(2+)(in) = Mg(2+)(out). Functionally, acts as a Mg(2+) transporter. Can also transport other divalent cations such as Fe(2+), Sr(2+), Ba(2+), Mn(2+), Cu(2+) and Co(2+) but to a much less extent than Mg(2+). In Pongo abelii (Sumatran orangutan), this protein is Magnesium transporter NIPA3 (NIPAL1).